Here is a 263-residue protein sequence, read N- to C-terminus: Glutamate racemase (263 aa).

Residues D12–S13 and Y44–G45 each bind substrate. C75 acts as the Proton donor/acceptor in catalysis. A substrate-binding site is contributed by N76–T77. The Proton donor/acceptor role is filled by C186. T187–H188 contributes to the substrate binding site.

This sequence belongs to the aspartate/glutamate racemases family.

It catalyses the reaction L-glutamate = D-glutamate. It participates in cell wall biogenesis; peptidoglycan biosynthesis. Functionally, provides the (R)-glutamate required for cell wall biosynthesis. This chain is Glutamate racemase, found in Ectopseudomonas mendocina (strain ymp) (Pseudomonas mendocina).